A 104-amino-acid chain; its full sequence is Matrix Gla protein (104 aa).

The N-terminal stretch at 1–19 (MKSLLPLAILAALAVATLC) is a signal peptide. The residue at position 21 (Glu-21) is a 4-carboxyglutamate. Residues Ser-22, Ser-25, and Ser-28 each carry the phosphoserine modification. One can recognise a Gla domain in the interval 51–97 (RAKAQKRVQERNKPAYEINREACDDYKLCERYAMVYGYNAAYNRYFR). A 4-carboxyglutamate mark is found at Glu-60, Glu-67, and Glu-71. A disulfide bridge links Cys-73 with Cys-79.

This sequence belongs to the osteocalcin/matrix Gla protein family. Requires vitamin K-dependent gamma-carboxylation for its function.

It is found in the secreted. In terms of biological role, associates with the organic matrix of bone and cartilage. Thought to act as an inhibitor of bone formation. The sequence is that of Matrix Gla protein (Mgp) from Mus musculus (Mouse).